A 382-amino-acid polypeptide reads, in one-letter code: MAAQRPLTIALVAGETSGDILGAGLIRALKARVPNARFVGVAGPRMQAEGCEAWYEMEELAVMGIVEVLGRLRRLLHIRADLTRRFTELKPDVFVGIDAPDFNITLEGNLKKQGIKTIHYVSPSVWAWRQKRVFKIGRSTHMVLAFLPFEKAFYDKFNVPCRFIGHTMADAMPLDPDKNAARDVLGIPHDAHCLALLPGSRGAEVEMLSADFLKTAQLLRQRYPDLEVVVPLVNAKRREQFEKIKAEVAPDLAVHLLDGMAREAMIASDAALLASGTAALECMLAKCPMVVGYRMKPFTFWLAKRLVKTEYVSLPNLLAGRELVKELLQEECEPQKLAEALLPLLANGKTSHAMHDTFRELHQQIRCNADEQAANAVLELAQ.

The protein belongs to the LpxB family.

It catalyses the reaction 2-N,3-O-bis[(3R)-3-hydroxytetradecanoyl]-alpha-D-glucosaminyl 1-phosphate + UDP-2-N,3-O-bis[(3R)-3-hydroxytetradecanoyl]-alpha-D-glucosamine = lipid A disaccharide (E. coli) + UDP + H(+). It carries out the reaction a lipid X + a UDP-2-N,3-O-bis[(3R)-3-hydroxyacyl]-alpha-D-glucosamine = a lipid A disaccharide + UDP + H(+). It participates in glycolipid biosynthesis; lipid IV(A) biosynthesis; lipid IV(A) from (3R)-3-hydroxytetradecanoyl-[acyl-carrier-protein] and UDP-N-acetyl-alpha-D-glucosamine: step 5/6. Functionally, condensation of UDP-2,3-diacylglucosamine and 2,3-diacylglucosamine-1-phosphate to form lipid A disaccharide, a precursor of lipid A, a phosphorylated glycolipid that anchors the lipopolysaccharide to the outer membrane of the cell. The protein is Lipid-A-disaccharide synthase of Salmonella paratyphi B (strain ATCC BAA-1250 / SPB7).